The chain runs to 409 residues: Protein a6 (409 aa).

Phosphoserine is present on serine 86. A compositionally biased stretch (basic residues) spans 106–120; it reads RAHRTGRRQAPRRAA. The segment at 106–165 is disordered; it reads RAHRTGRRQAPRRAATHSYPVTDSILITSDDEHNEQEPSSTARVRSQLSMRSPPPLAPLT. A Phosphothreonine modification is found at threonine 133. Serine 134 carries the phosphoserine modification. The segment covering 142 to 155 has biased composition (polar residues); the sequence is EPSSTARVRSQLSM.

This Drosophila melanogaster (Fruit fly) protein is Protein a6 (a6).